The primary structure comprises 129 residues: Small ribosomal subunit protein uS11 (129 aa).

This sequence belongs to the universal ribosomal protein uS11 family. In terms of assembly, part of the 30S ribosomal subunit. Interacts with proteins S7 and S18. Binds to IF-3.

Its function is as follows. Located on the platform of the 30S subunit, it bridges several disparate RNA helices of the 16S rRNA. Forms part of the Shine-Dalgarno cleft in the 70S ribosome. The protein is Small ribosomal subunit protein uS11 of Serratia proteamaculans (strain 568).